Reading from the N-terminus, the 1067-residue chain is Probable isoleucine--tRNA ligase, cytoplasmic (1067 aa).

The 'HIGH' region motif lies at 47–57 (PFATGLPHYGH). A 'KMSKS' region motif is present at residues 604 to 608 (KMSKR). Lysine 607 provides a ligand contact to ATP.

Belongs to the class-I aminoacyl-tRNA synthetase family.

The protein resides in the cytoplasm. The enzyme catalyses tRNA(Ile) + L-isoleucine + ATP = L-isoleucyl-tRNA(Ile) + AMP + diphosphate. This chain is Probable isoleucine--tRNA ligase, cytoplasmic (ileS), found in Dictyostelium discoideum (Social amoeba).